Reading from the N-terminus, the 318-residue chain is Methionyl-tRNA formyltransferase (318 aa).

110–113 (SLLP) is a binding site for (6S)-5,6,7,8-tetrahydrofolate.

It belongs to the Fmt family.

The enzyme catalyses L-methionyl-tRNA(fMet) + (6R)-10-formyltetrahydrofolate = N-formyl-L-methionyl-tRNA(fMet) + (6S)-5,6,7,8-tetrahydrofolate + H(+). Attaches a formyl group to the free amino group of methionyl-tRNA(fMet). The formyl group appears to play a dual role in the initiator identity of N-formylmethionyl-tRNA by promoting its recognition by IF2 and preventing the misappropriation of this tRNA by the elongation apparatus. This chain is Methionyl-tRNA formyltransferase, found in Latilactobacillus sakei subsp. sakei (strain 23K) (Lactobacillus sakei subsp. sakei).